The primary structure comprises 275 residues: 3-methyl-2-oxobutanoate hydroxymethyltransferase (275 aa).

Mg(2+) is bound by residues D55 and D94. Residues 55-56 (DS), D94, and K122 contribute to the 3-methyl-2-oxobutanoate site. E124 provides a ligand contact to Mg(2+). E191 functions as the Proton acceptor in the catalytic mechanism.

It belongs to the PanB family. As to quaternary structure, homodecamer; pentamer of dimers. Mg(2+) serves as cofactor.

Its subcellular location is the cytoplasm. The enzyme catalyses 3-methyl-2-oxobutanoate + (6R)-5,10-methylene-5,6,7,8-tetrahydrofolate + H2O = 2-dehydropantoate + (6S)-5,6,7,8-tetrahydrofolate. It functions in the pathway cofactor biosynthesis; (R)-pantothenate biosynthesis; (R)-pantoate from 3-methyl-2-oxobutanoate: step 1/2. Its function is as follows. Catalyzes the reversible reaction in which hydroxymethyl group from 5,10-methylenetetrahydrofolate is transferred onto alpha-ketoisovalerate to form ketopantoate. In Marinomonas sp. (strain MWYL1), this protein is 3-methyl-2-oxobutanoate hydroxymethyltransferase.